Reading from the N-terminus, the 878-residue chain is Valine--tRNA ligase (878 aa).

Positions 45–55 (PNVTGQLHMGH) match the 'HIGH' region motif. The 'KMSKS' region signature appears at 524 to 528 (KMSKS). Lysine 527 lines the ATP pocket. Residues 804 to 871 (PLKDLIDLEK…REKEVLEQRI (68 aa)) are a coiled coil.

This sequence belongs to the class-I aminoacyl-tRNA synthetase family. ValS type 1 subfamily. As to quaternary structure, monomer.

The protein localises to the cytoplasm. The enzyme catalyses tRNA(Val) + L-valine + ATP = L-valyl-tRNA(Val) + AMP + diphosphate. Catalyzes the attachment of valine to tRNA(Val). As ValRS can inadvertently accommodate and process structurally similar amino acids such as threonine, to avoid such errors, it has a 'posttransfer' editing activity that hydrolyzes mischarged Thr-tRNA(Val) in a tRNA-dependent manner. The protein is Valine--tRNA ligase of Carboxydothermus hydrogenoformans (strain ATCC BAA-161 / DSM 6008 / Z-2901).